A 135-amino-acid chain; its full sequence is Large ribosomal subunit protein uL16 (135 aa).

It belongs to the universal ribosomal protein uL16 family. In terms of assembly, part of the 50S ribosomal subunit.

Functionally, binds 23S rRNA and is also seen to make contacts with the A and possibly P site tRNAs. This chain is Large ribosomal subunit protein uL16 (rplP), found in Carsonella ruddii (strain PV).